The sequence spans 206 residues: Thymidylate kinase (206 aa).

An ATP-binding site is contributed by 11 to 18 (GPEGAGKT).

It belongs to the thymidylate kinase family.

The enzyme catalyses dTMP + ATP = dTDP + ADP. Functionally, phosphorylation of dTMP to form dTDP in both de novo and salvage pathways of dTTP synthesis. The sequence is that of Thymidylate kinase (tmk) from Deinococcus radiodurans (strain ATCC 13939 / DSM 20539 / JCM 16871 / CCUG 27074 / LMG 4051 / NBRC 15346 / NCIMB 9279 / VKM B-1422 / R1).